We begin with the raw amino-acid sequence, 340 residues long: Hyaluronan and proteoglycan link protein 2 (340 aa).

The signal sequence occupies residues M1 to G26. One can recognise an Ig-like V-type domain in the interval P34–S144. Intrachain disulfides connect C57/C128, C170/C240, C194/C215, C265/C336, and C290/C311. 2 consecutive Link domains span residues V148–T242 and L245–A338.

The protein belongs to the HAPLN family. As to expression, expressed only in adult brain.

Its subcellular location is the secreted. The protein resides in the extracellular space. The protein localises to the extracellular matrix. Mediates a firm binding of versican V2 to hyaluronic acid. May play a pivotal role in the formation of the hyaluronan-associated matrix in the central nervous system (CNS) which facilitates neuronal conduction and general structural stabilization. Binds to hyaluronic acid. The chain is Hyaluronan and proteoglycan link protein 2 (HAPLN2) from Homo sapiens (Human).